The primary structure comprises 274 residues: Bis(5'-nucleosyl)-tetraphosphatase, symmetrical (274 aa).

This sequence belongs to the Ap4A hydrolase family.

It catalyses the reaction P(1),P(4)-bis(5'-adenosyl) tetraphosphate + H2O = 2 ADP + 2 H(+). Hydrolyzes diadenosine 5',5'''-P1,P4-tetraphosphate to yield ADP. The protein is Bis(5'-nucleosyl)-tetraphosphatase, symmetrical of Shewanella sediminis (strain HAW-EB3).